Consider the following 324-residue polypeptide: MIRSVVRGIGGALPKKSLSNDDIAKFVETSDSWIVQRTGIRQRYIANEKETTVSLGVEAAQAALINAGLTIKDIDCIILATSTPNHTFPASAVEIQHALGMSHGFAFDIQAVCSGFIFALTTGDAYLRCGTAKRILVIGSDTFSRILDWQDRTTCVLFGDGAGAAVLEAQEIERGVASDHGILSTKLRSNGAYMDKLYVDGGPSTTQKTGYLRMEGREVFKYAVGMITDVVDECFAAAGMDSSQLDWFVPHQANKRIIEASAKKLGISIDKVVITVDRHGNTSAASVPLALTMAICDGKIKKGDLVMLEAMGGGFTWGAILIRW.

Active-site residues include cysteine 113 and histidine 251. The ACP-binding stretch occupies residues 252 to 256 (QANKR). Asparagine 281 is an active-site residue.

Belongs to the thiolase-like superfamily. FabH family. As to quaternary structure, homodimer.

The protein localises to the cytoplasm. It carries out the reaction malonyl-[ACP] + acetyl-CoA + H(+) = 3-oxobutanoyl-[ACP] + CO2 + CoA. It participates in lipid metabolism; fatty acid biosynthesis. Catalyzes the condensation reaction of fatty acid synthesis by the addition to an acyl acceptor of two carbons from malonyl-ACP. Catalyzes the first condensation reaction which initiates fatty acid synthesis and may therefore play a role in governing the total rate of fatty acid production. Possesses both acetoacetyl-ACP synthase and acetyl transacylase activities. Its substrate specificity determines the biosynthesis of branched-chain and/or straight-chain of fatty acids. This chain is Beta-ketoacyl-[acyl-carrier-protein] synthase III, found in Bartonella henselae (strain ATCC 49882 / DSM 28221 / CCUG 30454 / Houston 1) (Rochalimaea henselae).